A 480-amino-acid chain; its full sequence is Glutamyl-tRNA(Gln) amidotransferase subunit A (480 aa).

Active-site charge relay system residues include K74 and S149. S173 (acyl-ester intermediate) is an active-site residue.

This sequence belongs to the amidase family. GatA subfamily. Heterotrimer of A, B and C subunits.

The catalysed reaction is L-glutamyl-tRNA(Gln) + L-glutamine + ATP + H2O = L-glutaminyl-tRNA(Gln) + L-glutamate + ADP + phosphate + H(+). Its function is as follows. Allows the formation of correctly charged Gln-tRNA(Gln) through the transamidation of misacylated Glu-tRNA(Gln) in organisms which lack glutaminyl-tRNA synthetase. The reaction takes place in the presence of glutamine and ATP through an activated gamma-phospho-Glu-tRNA(Gln). The polypeptide is Glutamyl-tRNA(Gln) amidotransferase subunit A (Ruthia magnifica subsp. Calyptogena magnifica).